The chain runs to 872 residues: Alanine--tRNA ligase (872 aa).

H561, H565, C662, and H666 together coordinate Zn(2+).

Belongs to the class-II aminoacyl-tRNA synthetase family. The cofactor is Zn(2+).

The protein localises to the cytoplasm. The catalysed reaction is tRNA(Ala) + L-alanine + ATP = L-alanyl-tRNA(Ala) + AMP + diphosphate. Catalyzes the attachment of alanine to tRNA(Ala) in a two-step reaction: alanine is first activated by ATP to form Ala-AMP and then transferred to the acceptor end of tRNA(Ala). Also edits incorrectly charged Ser-tRNA(Ala) and Gly-tRNA(Ala) via its editing domain. The protein is Alanine--tRNA ligase of Thiobacillus denitrificans (strain ATCC 25259 / T1).